Reading from the N-terminus, the 360-residue chain is Phenylalanine--tRNA ligase alpha subunit (360 aa).

Residue E260 coordinates Mg(2+).

It belongs to the class-II aminoacyl-tRNA synthetase family. Phe-tRNA synthetase alpha subunit type 1 subfamily. As to quaternary structure, tetramer of two alpha and two beta subunits. It depends on Mg(2+) as a cofactor.

The protein localises to the cytoplasm. It carries out the reaction tRNA(Phe) + L-phenylalanine + ATP = L-phenylalanyl-tRNA(Phe) + AMP + diphosphate + H(+). In Bradyrhizobium sp. (strain BTAi1 / ATCC BAA-1182), this protein is Phenylalanine--tRNA ligase alpha subunit.